Here is an 819-residue protein sequence, read N- to C-terminus: Protein EFR3 homolog A (819 aa).

Phosphoserine is present on residues Ser360, Ser363, Ser420, and Ser692.

The protein belongs to the EFR3 family. In terms of assembly, component of a phosphatidylinositol 4-kinase (PI4K) complex, composed of PI4KA, EFR3 (EFR3A or EFR3B), TTC7 (TTC7A or TTC7B) and HYCC (HYCC1 or HYCC2). Post-translationally, palmitoylated at its N-terminus, anchoring the protein to the plasma membrane. In terms of tissue distribution, widely expressed. Expressed in neurons of the superior olivary complex of the auditory brainstem. Also expressed at lower levels in the cochlear nucleus, the lateral leminiscal nuclei and the inferior collicus.

It is found in the cell membrane. The protein resides in the cytoplasm. The protein localises to the cytosol. In terms of biological role, component of a complex required to localize phosphatidylinositol 4-kinase (PI4K) to the plasma membrane. The complex acts as a regulator of phosphatidylinositol 4-phosphate (PtdIns(4)P) synthesis. In the complex, EFR3A probably acts as the membrane-anchoring component. Also involved in responsiveness to G-protein-coupled receptors; it is however unclear whether this role is direct or indirect. This Mus musculus (Mouse) protein is Protein EFR3 homolog A.